Here is a 237-residue protein sequence, read N- to C-terminus: Endoglucanase-1 (237 aa).

The N-terminal stretch at 1–16 (MKAFHLLAALAGAAVA) is a signal peptide. Position 17 is a pyrrolidone carboxylic acid (glutamine 17).

Belongs to the glycosyl hydrolase 12 (cellulase H) family.

The protein resides in the secreted. It carries out the reaction Endohydrolysis of (1-&gt;4)-beta-D-glucosidic linkages in cellulose, lichenin and cereal beta-D-glucans.. The polypeptide is Endoglucanase-1 (Aspergillus aculeatus).